The primary structure comprises 120 residues: Large ribosomal subunit protein eL18 (120 aa).

Belongs to the eukaryotic ribosomal protein eL18 family.

The sequence is that of Large ribosomal subunit protein eL18 from Thermoplasma acidophilum (strain ATCC 25905 / DSM 1728 / JCM 9062 / NBRC 15155 / AMRC-C165).